The chain runs to 678 residues: DNA ligase (678 aa).

NAD(+) contacts are provided by residues 34 to 38 (DSEYD), 83 to 84 (SL), and Glu114. Catalysis depends on Lys116, which acts as the N6-AMP-lysine intermediate. Positions 137, 176, 293, and 317 each coordinate NAD(+). Positions 411, 414, 429, and 435 each coordinate Zn(2+). Positions 594–678 (PTRQPLNGES…LMAGYGQTLS (85 aa)) constitute a BRCT domain.

The protein belongs to the NAD-dependent DNA ligase family. LigA subfamily. It depends on Mg(2+) as a cofactor. Mn(2+) is required as a cofactor.

It catalyses the reaction NAD(+) + (deoxyribonucleotide)n-3'-hydroxyl + 5'-phospho-(deoxyribonucleotide)m = (deoxyribonucleotide)n+m + AMP + beta-nicotinamide D-nucleotide.. DNA ligase that catalyzes the formation of phosphodiester linkages between 5'-phosphoryl and 3'-hydroxyl groups in double-stranded DNA using NAD as a coenzyme and as the energy source for the reaction. It is essential for DNA replication and repair of damaged DNA. This Acinetobacter baumannii (strain SDF) protein is DNA ligase.